Here is a 176-residue protein sequence, read N- to C-terminus: Large ribosomal subunit protein uL10 (176 aa).

It belongs to the universal ribosomal protein uL10 family. As to quaternary structure, part of the ribosomal stalk of the 50S ribosomal subunit. The N-terminus interacts with L11 and the large rRNA to form the base of the stalk. The C-terminus forms an elongated spine to which L12 dimers bind in a sequential fashion forming a multimeric L10(L12)X complex.

Forms part of the ribosomal stalk, playing a central role in the interaction of the ribosome with GTP-bound translation factors. The polypeptide is Large ribosomal subunit protein uL10 (Sorangium cellulosum (strain So ce56) (Polyangium cellulosum (strain So ce56))).